Consider the following 657-residue polypeptide: Putative serine protease (657 aa).

A run of 3 helical transmembrane segments spans residues 4–24 (YLAT…LLMP), 46–62 (WLLT…PSGT), and 109–131 (LLSG…VLML). The Peptidase S39 domain occupies 239 to 434 (QPGSDFVECE…ETDRYARTME (196 aa)). Active-site for protease activity residues include His-284, Asp-318, and Ser-386. Positions 513-605 (PLGGLPISNG…PPSTGSVPKS (93 aa)) are disordered. The segment covering 548–559 (HTRRRRRNKKKS) has biased composition (basic residues). A compositionally biased stretch (basic and acidic residues) spans 560–569 (KNSETGHGPE). A compositionally biased stretch (low complexity) spans 571–589 (QSQQQSRPSSPIPDDSAPV).

Belongs to the peptidase S39B family.

The protein localises to the host membrane. In terms of biological role, putative serine protease. This is Putative serine protease from Mushroom bacilliform virus (isolate Australia/AUS LF-1) (MBV).